The primary structure comprises 436 residues: GTPase Der (436 aa).

EngA-type G domains are found at residues proline 4–proline 167 and valine 176–alanine 351. GTP-binding positions include glycine 10–serine 17, aspartate 57–isoleucine 61, asparagine 119–aspartate 122, glycine 182–serine 189, aspartate 229–methionine 233, and asparagine 294–aspartate 297. One can recognise a KH-like domain in the interval methionine 352–lysine 436.

It belongs to the TRAFAC class TrmE-Era-EngA-EngB-Septin-like GTPase superfamily. EngA (Der) GTPase family. Associates with the 50S ribosomal subunit.

In terms of biological role, GTPase that plays an essential role in the late steps of ribosome biogenesis. The chain is GTPase Der from Bacillus pumilus (strain SAFR-032).